The primary structure comprises 788 residues: Diacylglycerol kinase gamma (788 aa).

Over residues 83-93 (PRQETPDHPKE) the composition is skewed to basic and acidic residues. The disordered stretch occupies residues 83–150 (PRQETPDHPK…WGEPNAPASS (68 aa)). The segment covering 95–109 (ASSSEPNVSDSNAES) has biased composition (polar residues). EF-hand domains are found at residues 172 to 207 (RPQD…MLHV) and 217 to 252 (ELRP…TIPL). Aspartate 185, aspartate 187, asparagine 189, glutamate 196, aspartate 230, asparagine 232, aspartate 234, and glutamate 241 together coordinate Ca(2+). Phorbol-ester/DAG-type zinc fingers lie at residues 268–318 (RHAW…IPGC) and 333–380 (QHAW…STAC). Residues 427–561 (PGTHPLLVLV…LDRWYLEVMP (135 aa)) form the DAGKc domain. Positions 768–788 (MMGPPQKSSFFSLRRKSRSKD) are disordered.

It belongs to the eukaryotic diacylglycerol kinase family. As to expression, expressed specifically in brain. Highly expressed in cerebellar Purkinje cells (at protein level).

The protein resides in the membrane. The protein localises to the cytoplasm. It localises to the cytosol. It is found in the cytoskeleton. It carries out the reaction a 1,2-diacyl-sn-glycerol + ATP = a 1,2-diacyl-sn-glycero-3-phosphate + ADP + H(+). The enzyme catalyses 1,2-didecanoyl-sn-glycerol + ATP = 1,2-didecanoyl-sn-glycero-3-phosphate + ADP + H(+). The catalysed reaction is 1,2-di-(9Z-octadecenoyl)-sn-glycerol + ATP = 1,2-di-(9Z-octadecenoyl)-sn-glycero-3-phosphate + ADP + H(+). It catalyses the reaction 1-octadecanoyl-2-(9Z,12Z)-octadecadienoyl-sn-glycerol + ATP = 1-octadecanoyl-2-(9Z,12Z-octadecadienoyl)-sn-glycero-3-phosphate + ADP + H(+). It carries out the reaction 1-octadecanoyl-2-(5Z,8Z,11Z,14Z-eicosatetraenoyl)-sn-glycerol + ATP = 1-octadecanoyl-2-(5Z,8Z,11Z,14Z-eicosatetraenoyl)-sn-glycero-3-phosphate + ADP + H(+). It functions in the pathway lipid metabolism; glycerolipid metabolism. The activity is calcium-dependent. Requires phosphatidylserine for maximal activity. Its function is as follows. Diacylglycerol kinase that converts diacylglycerol/DAG into phosphatidic acid/phosphatidate/PA and regulates the respective levels of these two bioactive lipids. Thereby, acts as a central switch between the signaling pathways activated by these second messengers with different cellular targets and opposite effects in numerous biological processes. Has no apparent specificity with regard to the acyl compositions of diacylglycerol. Specifically expressed in the cerebellum where it controls the level of diacylglycerol which in turn regulates the activity of protein kinase C gamma. Through protein kinase C gamma, indirectly regulates the dendritic development of Purkinje cells, cerebellar long term depression and ultimately cerebellar motor coordination. The chain is Diacylglycerol kinase gamma (Dgkg) from Rattus norvegicus (Rat).